The chain runs to 341 residues: Ribosomal RNA small subunit methyltransferase H (341 aa).

Residues 47–49 (GGY), Asp-64, Phe-97, Asp-109, and Gln-116 contribute to the S-adenosyl-L-methionine site.

The protein belongs to the methyltransferase superfamily. RsmH family.

It localises to the cytoplasm. The catalysed reaction is cytidine(1402) in 16S rRNA + S-adenosyl-L-methionine = N(4)-methylcytidine(1402) in 16S rRNA + S-adenosyl-L-homocysteine + H(+). Functionally, specifically methylates the N4 position of cytidine in position 1402 (C1402) of 16S rRNA. The chain is Ribosomal RNA small subunit methyltransferase H from Allorhizobium ampelinum (strain ATCC BAA-846 / DSM 112012 / S4) (Agrobacterium vitis (strain S4)).